The sequence spans 318 residues: Small ribosomal subunit protein mS26 (318 aa).

The interval 295–318 (IDSKLNPTSNGAGNNGNNNNTTNL) is disordered. The span at 300–318 (NPTSNGAGNNGNNNNTTNL) shows a compositional bias: low complexity.

It belongs to the mitochondrion-specific ribosomal protein mS26 family. Component of the mitochondrial small ribosomal subunit (mt-SSU). Mature yeast 74S mitochondrial ribosomes consist of a small (37S) and a large (54S) subunit. The 37S small subunit contains a 15S ribosomal RNA (15S mt-rRNA) and 34 different proteins. The 54S large subunit contains a 21S rRNA (21S mt-rRNA) and 46 different proteins.

The protein localises to the mitochondrion. Its function is as follows. Component of the mitochondrial ribosome (mitoribosome), a dedicated translation machinery responsible for the synthesis of mitochondrial genome-encoded proteins, including at least some of the essential transmembrane subunits of the mitochondrial respiratory chain. The mitoribosomes are attached to the mitochondrial inner membrane and translation products are cotranslationally integrated into the membrane. This chain is Small ribosomal subunit protein mS26 (PET123), found in Saccharomyces cerevisiae (strain ATCC 204508 / S288c) (Baker's yeast).